Here is a 1351-residue protein sequence, read N- to C-terminus: DNA-directed RNA polymerase subunit beta' (1351 aa).

Zn(2+) contacts are provided by Cys70, Cys72, Cys85, and Cys88. Residues Asp460, Asp462, and Asp464 each contribute to the Mg(2+) site. Zn(2+) is bound by residues Cys801, Cys875, Cys882, and Cys885.

Belongs to the RNA polymerase beta' chain family. In terms of assembly, the RNAP catalytic core consists of 2 alpha, 1 beta, 1 beta' and 1 omega subunit. When a sigma factor is associated with the core the holoenzyme is formed, which can initiate transcription. It depends on Mg(2+) as a cofactor. The cofactor is Zn(2+).

The catalysed reaction is RNA(n) + a ribonucleoside 5'-triphosphate = RNA(n+1) + diphosphate. In terms of biological role, DNA-dependent RNA polymerase catalyzes the transcription of DNA into RNA using the four ribonucleoside triphosphates as substrates. The sequence is that of DNA-directed RNA polymerase subunit beta' from Syntrophobacter fumaroxidans (strain DSM 10017 / MPOB).